Here is a 241-residue protein sequence, read N- to C-terminus: Orotidine 5'-phosphate decarboxylase (241 aa).

Residues D18, K39, 66-75 (DLKFHDIPAT), T130, R192, Q201, G221, and R222 each bind substrate. The active-site Proton donor is the K68.

Belongs to the OMP decarboxylase family. Type 1 subfamily. Homodimer.

It carries out the reaction orotidine 5'-phosphate + H(+) = UMP + CO2. Its pathway is pyrimidine metabolism; UMP biosynthesis via de novo pathway; UMP from orotate: step 2/2. Functionally, catalyzes the decarboxylation of orotidine 5'-monophosphate (OMP) to uridine 5'-monophosphate (UMP). This is Orotidine 5'-phosphate decarboxylase from Synechococcus sp. (strain CC9605).